The chain runs to 537 residues: MESSSSLKGSALGKLVVTSGLLHSSWSKILEIHNPPYSNHDPGLQVSKKKKDSGLEFQIHREEKFTLVVFSAPPICRSSSSDSTLLHVKDKENPFPFLCSENNPSFSLHTPAFNLFTSASTSLTYLKSELLQTLKSEKPVIITGAALGGSVASLYTLWLLETIEPTLKRPLCITFGSPLIGDASLQQILENSVRNSCFLHVVSAQTRIKMDFFKPFGTFLICFDSGCVCIEDHVAVTELLNGVHDSGLVDYSQVLNRLDQSMLSLADSRLIPEDVIKGIEKRAEMKNLRFDMMFKKLNDMKISMAYIEWYKKKCKEVKIGYYDRFKTQLAFPSKEFDINIKNHHKSELNRFWKSVVEEVERRPQSDASILKRRFLFSGNNYRRMIEPLDIAEYYLEGRKEYRTTGRSHHYVMLEKWFGMESILIEKERCKKRDLSDLLTFDSCFWAEVEDSLIVINQLNTTVGMRDDVREVLTRKLVEFEGYVWEIITKREVSPEIFLEESSFMKWWKEYKKIKGFNSSYLTEFMNTRKYESYGKSQ.

Positions 1–27 (MESSSSLKGSALGKLVVTSGLLHSSWS) are cleaved as a signal peptide. A helical membrane pass occupies residues 140–160 (VIITGAALGGSVASLYTLWLL).

Part of a nuclear complex made of EDS1, PAD4 and SAG101, that can be redirected to the cytoplasm in the presence of an extranuclear form of EDS1. Interacts directly with EDS1. In terms of tissue distribution, expressed in senescing leaves.

It is found in the membrane. The protein resides in the nucleus. Its subcellular location is the cytoplasm. It catalyses the reaction a carboxylic ester + H2O = an alcohol + a carboxylate + H(+). Acyl hydrolase that triggers the leaf senescence onset. Can use triolein as substrate to produce oleic acids. Its function is as follows. Involved in the EDS1-dependent intrinsic and indispensable resistance signaling pathway; together with PAD4, required for programmed cell death triggered by RPS4 in response to avirulent pathogens (e.g. P.syringae pv. tomato strain DC3000 and H.parasitica isolates CALA2 and EMWA1) and in restricting the growth of virulent pathogens (e.g. H.parasitica isolates NOCO2 and P.syringae pv. tomato strain DC3000 avrRps4). Contributes in reinforcing the immune response around hypersensitive response foci. Regulates the nuclear localization of EDS1. Essential for the RPP8/HRT-mediated resistance to the turnip crinkle virus (TCV). Involved in the post-invasion resistance to P.pachyrhizi in the mesophyll. This is Senescence-associated carboxylesterase 101 (SAG101) from Arabidopsis thaliana (Mouse-ear cress).